The sequence spans 281 residues: Probable endonuclease 4 (281 aa).

Zn(2+)-binding residues include His-69, His-109, Glu-145, Asp-179, His-182, His-216, Asp-229, His-231, and Glu-261.

Belongs to the AP endonuclease 2 family. The cofactor is Zn(2+).

It catalyses the reaction Endonucleolytic cleavage to 5'-phosphooligonucleotide end-products.. In terms of biological role, endonuclease IV plays a role in DNA repair. It cleaves phosphodiester bonds at apurinic or apyrimidinic (AP) sites, generating a 3'-hydroxyl group and a 5'-terminal sugar phosphate. This chain is Probable endonuclease 4, found in Pectobacterium atrosepticum (strain SCRI 1043 / ATCC BAA-672) (Erwinia carotovora subsp. atroseptica).